The sequence spans 909 residues: Protein translocase subunit SecA (909 aa).

Residues Gln-87, 105 to 109 (GEGKT), and Asp-507 contribute to the ATP site. 2 disordered regions span residues 567-586 (RRID…PGSS) and 859-909 (YSEA…GKLD). Residues 865–889 (EHQSVTEGHEAKQQPFVRKSDKIGR) show a composition bias toward basic and acidic residues. 4 residues coordinate Zn(2+): Cys-893, Cys-895, Cys-904, and His-905. Basic residues predominate over residues 899–909 (RKYKQCHGKLD).

Belongs to the SecA family. As to quaternary structure, monomer and homodimer. Part of the essential Sec protein translocation apparatus which comprises SecA, SecYEG and auxiliary proteins SecDF-YajC and YidC. Requires Zn(2+) as cofactor.

The protein localises to the cell inner membrane. Its subcellular location is the cytoplasm. The catalysed reaction is ATP + H2O + cellular proteinSide 1 = ADP + phosphate + cellular proteinSide 2.. Its function is as follows. Part of the Sec protein translocase complex. Interacts with the SecYEG preprotein conducting channel. Has a central role in coupling the hydrolysis of ATP to the transfer of proteins into and across the cell membrane, serving both as a receptor for the preprotein-SecB complex and as an ATP-driven molecular motor driving the stepwise translocation of polypeptide chains across the membrane. The polypeptide is Protein translocase subunit SecA (Nitrosomonas eutropha (strain DSM 101675 / C91 / Nm57)).